The following is a 116-amino-acid chain: MNLYDKAHELARVLKDCPEVVELRNTSVKMKENEDNLKMLKDFRQLQYEAYYEQLNNEKISEETETKLNKLGSIIAMNKTVSNYLEAESRFAVIWEDLIKILNEAVDVDLSFESKK.

It belongs to the UPF0342 family.

This is UPF0342 protein CTC_01059 from Clostridium tetani (strain Massachusetts / E88).